The sequence spans 115 residues: Xenovulene A biosynthesis cluster protein asL2 (115 aa).

Its function is as follows. Part of the gene cluster that mediates the biosynthesis of xenovulene A, an unusual meroterpenoid that has potent inhibitory effects on the human gamma-aminobutyrate A (GABAA) benzodiazepine receptor. The first step of xenovulene A biosynthesis is the biosynthesis of 3-methylorcinaldehyde performed by the non-reducing polyketide synthase aspks1. The salicylate hydroxylase asL1 then catalyzes the oxidative dearomatization of 3-methylorcinaldehyde to yield a dearomatized hydroxycyclohexadione. The 2-oxoglutarate-dependent dioxygenase asL3 further catalyzes the oxidative ring expansion to provide the first tropolone metabolite. The cytochrome P450 monooxygenase asR2 allows the synthesis of tropolone hemiacetal. In parallel, a previously unrecognised class of terpene cyclase, asR6, produces alpha-humulene from farnesylpyrophosphate (FPP). The putative Diels-Alderase asR5 probably catalyzes the formation of the tropolone-humulene skeleton by linking humulene and the polyketide moiety. Oxidative-ring contractions catalyzed by asL4 and asL6 then processively remove carbon atoms from the polyketide to yield xenovulene A. This is Xenovulene A biosynthesis cluster protein asL2 from Sarocladium schorii (Acremonium strictum (strain IMI 501407)).